The primary structure comprises 86 residues: MSDVEERINQIIQVLREQVVQDTAVPRNIRRAAEQAIEALMNKEKEPAVRAADAIAILEEISEDPNMPLHTRTIIWEVLGALEQIK.

This sequence belongs to the UPF0147 family.

The sequence is that of UPF0147 protein PYRAB16980 from Pyrococcus abyssi (strain GE5 / Orsay).